The primary structure comprises 176 residues: Large ribosomal subunit protein uL10 (176 aa).

It belongs to the universal ribosomal protein uL10 family. In terms of assembly, part of the ribosomal stalk of the 50S ribosomal subunit. The N-terminus interacts with L11 and the large rRNA to form the base of the stalk. The C-terminus forms an elongated spine to which L12 dimers bind in a sequential fashion forming a multimeric L10(L12)X complex.

Functionally, forms part of the ribosomal stalk, playing a central role in the interaction of the ribosome with GTP-bound translation factors. This chain is Large ribosomal subunit protein uL10, found in Thioalkalivibrio sulfidiphilus (strain HL-EbGR7).